Reading from the N-terminus, the 407-residue chain is Methylthioribose kinase (407 aa).

Residues N40, K57, and 111–113 (EDL) contribute to the ATP site. D229 provides a ligand contact to substrate. 246–248 (DAE) lines the ATP pocket. R344 provides a ligand contact to substrate.

The protein belongs to the methylthioribose kinase family. As to quaternary structure, homodimer.

It catalyses the reaction 5-(methylsulfanyl)-D-ribose + ATP = 5-(methylsulfanyl)-alpha-D-ribose 1-phosphate + ADP + H(+). The protein operates within amino-acid biosynthesis; L-methionine biosynthesis via salvage pathway; S-methyl-5-thio-alpha-D-ribose 1-phosphate from S-methyl-5'-thioadenosine (hydrolase route): step 2/2. Catalyzes the phosphorylation of methylthioribose into methylthioribose-1-phosphate. The protein is Methylthioribose kinase of Yersinia pseudotuberculosis serotype IB (strain PB1/+).